The sequence spans 144 residues: Mediator of RNA polymerase II transcription subunit 10 (144 aa).

Belongs to the Mediator complex subunit 10 family. In terms of assembly, component of the Mediator complex.

It localises to the cytoplasm. It is found in the nucleus. The protein resides in the nucleus envelope. Its function is as follows. Component of the Mediator complex, a coactivator involved in the regulated transcription of nearly all RNA polymerase II-dependent genes. Mediator functions as a bridge to convey information from gene-specific regulatory proteins to the basal RNA polymerase II transcription machinery. Mediator is recruited to promoters by direct interactions with regulatory proteins and serves as a scaffold for the assembly of a functional preinitiation complex with RNA polymerase II and the general transcription factors. The sequence is that of Mediator of RNA polymerase II transcription subunit 10 (med10) from Schizosaccharomyces pombe (strain 972 / ATCC 24843) (Fission yeast).